The following is a 325-amino-acid chain: Transaldolase (325 aa).

Lys125 serves as the catalytic Schiff-base intermediate with substrate.

The protein belongs to the transaldolase family. Type 2 subfamily.

The protein resides in the cytoplasm. It catalyses the reaction D-sedoheptulose 7-phosphate + D-glyceraldehyde 3-phosphate = D-erythrose 4-phosphate + beta-D-fructose 6-phosphate. It participates in carbohydrate degradation; pentose phosphate pathway; D-glyceraldehyde 3-phosphate and beta-D-fructose 6-phosphate from D-ribose 5-phosphate and D-xylulose 5-phosphate (non-oxidative stage): step 2/3. In terms of biological role, transaldolase is important for the balance of metabolites in the pentose-phosphate pathway. The polypeptide is Transaldolase (Campylobacter jejuni subsp. jejuni serotype O:6 (strain 81116 / NCTC 11828)).